The sequence spans 207 residues: Small ribosomal subunit protein uS4c (207 aa).

Positions 92–156 (MRLDNILFRL…YQSIITKRIE (65 aa)) constitute an S4 RNA-binding domain.

Belongs to the universal ribosomal protein uS4 family. Part of the 30S ribosomal subunit. Contacts protein S5. The interaction surface between S4 and S5 is involved in control of translational fidelity.

It localises to the plastid. The protein localises to the chloroplast. One of the primary rRNA binding proteins, it binds directly to 16S rRNA where it nucleates assembly of the body of the 30S subunit. Functionally, with S5 and S12 plays an important role in translational accuracy. This chain is Small ribosomal subunit protein uS4c (rps4), found in Equisetum sylvaticum (Wood horsetail).